The sequence spans 303 residues: N-acetyl-D-glucosamine kinase (303 aa).

ATP is bound by residues 4–11 and 133–140; these read GFDVGGTK and GFGGGLIF. Histidine 157, cysteine 177, cysteine 179, and cysteine 184 together coordinate Zn(2+).

This sequence belongs to the ROK (NagC/XylR) family. NagK subfamily.

It catalyses the reaction N-acetyl-D-glucosamine + ATP = N-acetyl-D-glucosamine 6-phosphate + ADP + H(+). Its pathway is cell wall biogenesis; peptidoglycan recycling. Catalyzes the phosphorylation of N-acetyl-D-glucosamine (GlcNAc) derived from cell-wall degradation, yielding GlcNAc-6-P. The protein is N-acetyl-D-glucosamine kinase of Aliivibrio fischeri (strain ATCC 700601 / ES114) (Vibrio fischeri).